Here is a 134-residue protein sequence, read N- to C-terminus: uncharacterized protein (134 aa).

A run of 2 helical transmembrane segments spans residues 16 to 36 (IFSFVFDIFLFIFDVIWNTKL) and 43 to 63 (IAYFLIFFMVIKLSIYAIHGT).

It belongs to the plectrovirus ORF5 family.

It localises to the host membrane. This is an uncharacterized protein from Spiroplasma citri (SpV1).